Consider the following 40-residue polypeptide: Acyl-CoA-binding protein 2 (40 aa).

Residues 1-15 (ALKEEFEEHAEKAKT) are compositionally biased toward basic and acidic residues. A disordered region spans residues 1–25 (ALKEEFEEHAEKAKTLPENTSSENK). Residues 2–40 (LKEEFEEHAEKAKTLPENTSSENKLTLYGLYKQATVGNV) form the ACB domain.

Belongs to the ACBP family.

Its subcellular location is the cytoplasm. Its function is as follows. Binds medium- and long-chain acyl-CoA esters with very high affinity and may function as an intracellular carrier of acyl-CoA esters. The polypeptide is Acyl-CoA-binding protein 2 (Digitalis lanata (Grecian foxglove)).